A 303-amino-acid chain; its full sequence is Light-independent protochlorophyllide reductase iron-sulfur ATP-binding protein (303 aa).

Residues 1–24 (MSSVLERPAAPAILPSRQDGEGSV) form a disordered region. Residues 47 to 52 (GIGKST) and Lys76 each bind ATP. Ser51 lines the Mg(2+) pocket. [4Fe-4S] cluster is bound by residues Cys132 and Cys166. ATP-binding positions include 217–218 (NR) and 241–243 (PDL).

This sequence belongs to the NifH/BchL/ChlL family. As to quaternary structure, homodimer. Protochlorophyllide reductase is composed of three subunits; BchL, BchN and BchB. The cofactor is [4Fe-4S] cluster.

The catalysed reaction is chlorophyllide a + oxidized 2[4Fe-4S]-[ferredoxin] + 2 ADP + 2 phosphate = protochlorophyllide a + reduced 2[4Fe-4S]-[ferredoxin] + 2 ATP + 2 H2O. Its pathway is porphyrin-containing compound metabolism; bacteriochlorophyll biosynthesis (light-independent). Component of the dark-operative protochlorophyllide reductase (DPOR) that uses Mg-ATP and reduced ferredoxin to reduce ring D of protochlorophyllide (Pchlide) to form chlorophyllide a (Chlide). This reaction is light-independent. The L component serves as a unique electron donor to the NB-component of the complex, and binds Mg-ATP. This Rhodospirillum centenum (strain ATCC 51521 / SW) protein is Light-independent protochlorophyllide reductase iron-sulfur ATP-binding protein.